The sequence spans 363 residues: NADH-quinone oxidoreductase subunit H (363 aa).

A run of 10 helical transmembrane segments spans residues 29-49, 62-82, 96-116, 127-147, 163-183, 202-222, 239-257, 264-286, 299-319, and 339-359; these read VLKILLIAVPVIVTVAFYVVW, GPMYVGMGIFQAFADVFKLLF, FIIAPLLTLAPAFAAWSVVPF, VGLLYLLAMTSLGVYGIILAG, AAQVVSYEIAMGFALVGVMIA, FFDWFLIPLFPLFIVYWVSGV, IVAGHMVEYSGGAFALFFL, ILVSFLISIFFLGGWLSPIQGWV, TGGWPWLLMKVFFFASAYIWF, and FIPLTIVWIAVTALMVFYGVI.

This sequence belongs to the complex I subunit 1 family. In terms of assembly, NDH-1 is composed of 14 different subunits. Subunits NuoA, H, J, K, L, M, N constitute the membrane sector of the complex.

It is found in the cell inner membrane. It carries out the reaction a quinone + NADH + 5 H(+)(in) = a quinol + NAD(+) + 4 H(+)(out). NDH-1 shuttles electrons from NADH, via FMN and iron-sulfur (Fe-S) centers, to quinones in the respiratory chain. The immediate electron acceptor for the enzyme in this species is believed to be ubiquinone. Couples the redox reaction to proton translocation (for every two electrons transferred, four hydrogen ions are translocated across the cytoplasmic membrane), and thus conserves the redox energy in a proton gradient. This subunit may bind ubiquinone. The protein is NADH-quinone oxidoreductase subunit H of Xanthomonas campestris pv. campestris (strain B100).